The chain runs to 281 residues: 2-dehydro-3-deoxyphosphooctonate aldolase (281 aa).

This sequence belongs to the KdsA family.

The protein resides in the cytoplasm. It catalyses the reaction D-arabinose 5-phosphate + phosphoenolpyruvate + H2O = 3-deoxy-alpha-D-manno-2-octulosonate-8-phosphate + phosphate. It participates in carbohydrate biosynthesis; 3-deoxy-D-manno-octulosonate biosynthesis; 3-deoxy-D-manno-octulosonate from D-ribulose 5-phosphate: step 2/3. Its pathway is bacterial outer membrane biogenesis; lipopolysaccharide biosynthesis. The protein is 2-dehydro-3-deoxyphosphooctonate aldolase of Pseudomonas entomophila (strain L48).